The chain runs to 250 residues: rRNA methyltransferase 2, mitochondrial (250 aa).

Residues 1–35 constitute a mitochondrion transit peptide; sequence MRLVFTGNCVFKRLLHTEIGGKYAKQQPRNLKGRS. S-adenosyl-L-methionine contacts are provided by residues 90–93, Asp-119, 136–137, and Asp-161; these read PGSW and DF. Lys-201 functions as the Proton acceptor in the catalytic mechanism.

It belongs to the class I-like SAM-binding methyltransferase superfamily. RNA methyltransferase RlmE family.

It is found in the mitochondrion. It catalyses the reaction a uridine in rRNA + S-adenosyl-L-methionine = a 2'-O-methyluridine in rRNA + S-adenosyl-L-homocysteine + H(+). S-adenosyl-L-methionine-dependent 2'-O-ribose methyltransferase that catalyzes the formation of 2'-O-methyluridine at position 1579 (Um1579) in the mitochondrial large subunit ribosomal RNA (mtLSU rRNA), a universally conserved modification in the peptidyl transferase domain of the mtLSU rRNA. This activity may require prior 2'-O-methylguanosine modification at position 1580 (Gm1580) by MRM3. Essential for late-stage assembly of mtLSU required for efficient translation of mitochondrial DNA encoded proteins; methyltransferase activity is not required for this function. Essential for mitochondrial respiratory function. The protein is rRNA methyltransferase 2, mitochondrial of Drosophila melanogaster (Fruit fly).